The chain runs to 304 residues: Coenzyme PQQ synthesis protein B (304 aa).

The protein belongs to the PqqB family.

It functions in the pathway cofactor biosynthesis; pyrroloquinoline quinone biosynthesis. May be involved in the transport of PQQ or its precursor to the periplasm. In Azoarcus sp. (strain BH72), this protein is Coenzyme PQQ synthesis protein B.